The following is a 158-amino-acid chain: Cyclic pyranopterin monophosphate synthase (158 aa).

Residues 75 to 77 (LCH) and 113 to 114 (ME) each bind substrate. Asp128 is a catalytic residue.

Belongs to the MoaC family. In terms of assembly, homohexamer; trimer of dimers.

The enzyme catalyses (8S)-3',8-cyclo-7,8-dihydroguanosine 5'-triphosphate = cyclic pyranopterin phosphate + diphosphate. It participates in cofactor biosynthesis; molybdopterin biosynthesis. Functionally, catalyzes the conversion of (8S)-3',8-cyclo-7,8-dihydroguanosine 5'-triphosphate to cyclic pyranopterin monophosphate (cPMP). The chain is Cyclic pyranopterin monophosphate synthase from Roseiflexus castenholzii (strain DSM 13941 / HLO8).